We begin with the raw amino-acid sequence, 466 residues long: MKRFYIHTIGCQMNVYDSSQLSAILTAMGHRSVNAPEQADLVFVNTCTIRAKAKQKATSFVGRLAAMKRARPDMIVGVGGCLAQEEGRQLLDAFPCVDIVFGTHALGRLPGHIQAVAHQGDRIVDVEMTAAIDESVHALQGPDSSGVTGFITIMRGCDNFCTYCVVPYVRGRETSRAPEHILDEIRARVAGGLREITLLGQNVNSYGQKEGLCSFADLLARVNEIDGLHRIRFTTSHPKDLSPELAAAFTSLDKLCSHVHLPAQSGSDAVLKRMNRRYTRQAYLEKLHWLREAQPGMALSTDIIVGFPGETEQDFLQTLDLIEKVRYDSIFAFMYSDRPLAPARAFDGKVDEAEKQQRIYALLELQNRITAEKNRALEGRVEQVLVEGKSKSSGRNDITADTVQWTGRTTCNRVANFTVPRELASGNAVGPGAMVRVEIMSGLAHSLSGIAVGVEKPGAGGDAHAA.

Positions 2-118 (KRFYIHTIGC…LPGHIQAVAH (117 aa)) constitute an MTTase N-terminal domain. Residues C11, C47, C81, C157, C161, and C164 each contribute to the [4Fe-4S] cluster site. The Radical SAM core domain occupies 143–372 (DSSGVTGFIT…LELQNRITAE (230 aa)). The TRAM domain occupies 375–453 (RALEGRVEQV…AHSLSGIAVG (79 aa)).

This sequence belongs to the methylthiotransferase family. MiaB subfamily. As to quaternary structure, monomer. It depends on [4Fe-4S] cluster as a cofactor.

It is found in the cytoplasm. The catalysed reaction is N(6)-dimethylallyladenosine(37) in tRNA + (sulfur carrier)-SH + AH2 + 2 S-adenosyl-L-methionine = 2-methylsulfanyl-N(6)-dimethylallyladenosine(37) in tRNA + (sulfur carrier)-H + 5'-deoxyadenosine + L-methionine + A + S-adenosyl-L-homocysteine + 2 H(+). Functionally, catalyzes the methylthiolation of N6-(dimethylallyl)adenosine (i(6)A), leading to the formation of 2-methylthio-N6-(dimethylallyl)adenosine (ms(2)i(6)A) at position 37 in tRNAs that read codons beginning with uridine. The chain is tRNA-2-methylthio-N(6)-dimethylallyladenosine synthase from Desulfosudis oleivorans (strain DSM 6200 / JCM 39069 / Hxd3) (Desulfococcus oleovorans).